Consider the following 444-residue polypeptide: MSNTILQNLPKGQKVGIAFSGGLDTSAALLWMRQKGAVPYAYTANLGQPDEDDYNAIPKKAMAYGAENARLIDCRSQLAHEGIAAIQCGAFHISTGGIPYFNTTPLGRAVTGTMLVAAMKEDDVNIWGDGSTFKGNDIERFYRYGLLTNPNLKIYKPWLDVQFIEELGGRLEMSQFLIENGFDYKMSVEKAYSTDSNMLGATHEAKDLEQLSTGMKIVKPIMGVAFWDEKVEIKPETVTVTFEDGVPVALNGKHFDNAVDLILEANRIGGRHGLGMSDQIENRIIEAKSRGIYEAPGMALLHIAYERLVTGIHNEDTIEQYRINGIRLGRLLYQGRWFDPQALMLRETAQRWVAKAITGTVTLELRRGNDFTILNTESPNLTYEAERLSMEKVEDAPFDPVDRIGQLTMRNLDVSDTRGKLGIYAQTGLLSAIKDSVLPQLGKK.

ATP-binding positions include 18–26 (AFSGGLDTS) and Ala44. Tyr100 contacts L-citrulline. The ATP site is built by Gly130 and Thr132. L-aspartate contacts are provided by Thr132, Asn136, and Asp137. Position 136 (Asn136) interacts with L-citrulline. An ATP-binding site is contributed by Asp137. 2 residues coordinate L-citrulline: Arg140 and Ser193. Residue Asp195 participates in ATP binding. Residues Thr202, Glu204, and Glu281 each contribute to the L-citrulline site.

The protein belongs to the argininosuccinate synthase family. Type 2 subfamily. Homotetramer.

The protein localises to the cytoplasm. It catalyses the reaction L-citrulline + L-aspartate + ATP = 2-(N(omega)-L-arginino)succinate + AMP + diphosphate + H(+). Its pathway is amino-acid biosynthesis; L-arginine biosynthesis; L-arginine from L-ornithine and carbamoyl phosphate: step 2/3. The protein is Argininosuccinate synthase of Haemophilus influenzae (strain PittEE).